Reading from the N-terminus, the 494-residue chain is Glucose-6-phosphate exchanger SLC37A2 (494 aa).

A helical transmembrane segment spans residues Tyr-20–Leu-37. N-linked (GlcNAc...) asparagine glycosylation is found at Asn-52, Asn-63, and Asn-67. A run of 11 helical transmembrane segments spans residues Phe-85 to Ile-105, Leu-116 to Trp-136, Leu-146 to Val-166, Ser-187 to Leu-207, Ser-208 to Val-228, Leu-295 to Ile-315, Gly-327 to Val-347, Ala-355 to Ile-375, Val-384 to Ala-404, Ala-427 to Ile-447, and Val-455 to Tyr-475.

It belongs to the major facilitator superfamily. Organophosphate:Pi antiporter (OPA) (TC 2.A.1.4) family.

It localises to the endoplasmic reticulum membrane. The enzyme catalyses D-glucose 6-phosphate(in) + phosphate(out) = D-glucose 6-phosphate(out) + phosphate(in). In terms of biological role, inorganic phosphate and glucose-6-phosphate antiporter. May transport cytoplasmic glucose-6-phosphate into the lumen of the endoplasmic reticulum and translocate inorganic phosphate into the opposite direction. The chain is Glucose-6-phosphate exchanger SLC37A2 from Danio rerio (Zebrafish).